Consider the following 138-residue polypeptide: Large ribosomal subunit protein uL16 (138 aa).

It belongs to the universal ribosomal protein uL16 family. As to quaternary structure, part of the 50S ribosomal subunit.

Functionally, binds 23S rRNA and is also seen to make contacts with the A and possibly P site tRNAs. The chain is Large ribosomal subunit protein uL16 from Chlamydia pneumoniae (Chlamydophila pneumoniae).